Reading from the N-terminus, the 37-residue chain is Potassium channel toxin alpha-KTx 1.11 (37 aa).

Intrachain disulfides connect cysteine 7/cysteine 28, cysteine 13/cysteine 33, and cysteine 17/cysteine 35.

This sequence belongs to the short scorpion toxin superfamily. Potassium channel inhibitor family. Alpha-KTx 01 subfamily. In terms of tissue distribution, expressed by the venom gland.

The protein resides in the secreted. In terms of biological role, reversibly blocks the high conductance calcium-activated potassium channels composed of only alpha subunits (KCa1.1/KCNMA1). Unreversibly blocks the high conductance calcium-activated potassium channels composed of alpha and beta1 subunits (KCNMA1 and KCNMB1). Unreversibly and weakly blocks the high conductance calcium-activated potassium channels composed of alpha and beta4 (KCNMA1 and KCNMB4). The sequence is that of Potassium channel toxin alpha-KTx 1.11 from Centruroides noxius (Mexican scorpion).